Reading from the N-terminus, the 414-residue chain is Ceramide synthase 5 (414 aa).

At 1–43 (MATAAAETLGLLWGWLWSESFWLPQNVSWADLEGPGDGYGYPR) the chain is on the lumenal side. The N-linked (GlcNAc...) asparagine glycan is linked to N26. A helical transmembrane segment spans residues 44–64 (AQHVLSVFPLAVCIFSVRMLF). The segment at 75-136 (RVGIKDSPVN…RHRRNQDKPP (62 aa)) is homeobox-like. A TLC domain is found at 139–340 (TKFCESMWRF…IVQTASKALS (202 aa)). The next 4 membrane-spanning stretches (helical) occupy residues 148-168 (FTYY…MPWF), 187-207 (LYYY…SQFI), 214-234 (FLMM…SYVN), and 272-292 (LFVI…PLWI). The Last loop motif motif lies at 299-309 (ESWEIIGPYPS). Residues 312–332 (LFNALLLILQVLHAIWSYLIV) traverse the membrane as a helical segment. Topologically, residues 333 to 414 (QTASKALSRG…RASPHLHSCD (82 aa)) are cytoplasmic. The tract at residues 347–373 (DDRSDVESSSEEEDETTHKNNLSGSSS) is disordered.

As to quaternary structure, interacts with PAQR4; the interaction regulates the stability and activity of CERS5 and is inhibited in presence of ceramides. Phosphorylated at the C-terminus by CK2. Ubiquitously expressed, with highest levels in testis and kidney. Expressed in pulmonary epithelia.

It is found in the endoplasmic reticulum membrane. The enzyme catalyses a sphingoid base + hexadecanoyl-CoA = an N-hexadecanoyl-sphingoid base + CoA + H(+). It catalyses the reaction sphinganine + hexadecanoyl-CoA = N-hexadecanoylsphinganine + CoA + H(+). It carries out the reaction hexadecasphinganine + hexadecanoyl-CoA = N-hexadecanoylhexadecasphinganine + CoA + H(+). The catalysed reaction is sphing-4-enine + hexadecanoyl-CoA = N-hexadecanoylsphing-4-enine + CoA + H(+). The enzyme catalyses 2-hydroxyhexadecanoyl-CoA + sphinganine = N-(2-hydroxyhexadecanoyl)-sphinganine + CoA + H(+). It catalyses the reaction sphinganine + tetradecanoyl-CoA = N-(tetradecanoyl)-sphinganine + CoA + H(+). It carries out the reaction sphinganine + octadecanoyl-CoA = N-(octadecanoyl)-sphinganine + CoA + H(+). The catalysed reaction is sphinganine + (9Z)-octadecenoyl-CoA = N-(9Z-octadecenoyl)-sphinganine + CoA + H(+). The enzyme catalyses a fatty acyl-CoA + sphing-4-enine = an N-acylsphing-4-enine + CoA + H(+). It catalyses the reaction tetracosenoyl-CoA + sphing-4-enine = N-(tetracosenoyl)-sphing-4-enine + CoA + H(+). The protein operates within lipid metabolism; sphingolipid metabolism. Its activity is regulated as follows. Inhibited by fumonisin B1. Functionally, ceramide synthase that catalyzes the transfer of the acyl chain from acyl-CoA to a sphingoid base, with high selectivity toward palmitoyl-CoA (hexadecanoyl-CoA; C16:0-CoA). Can use other acyl donors, but with less efficiency. N-acylates sphinganine and sphingosine bases to form dihydroceramides and ceramides in de novo synthesis and salvage pathways, respectively. Plays a role in de novo ceramide synthesis and surfactant homeostasis in pulmonary epithelia. The protein is Ceramide synthase 5 of Mus musculus (Mouse).